The following is a 360-amino-acid chain: Chorismate synthase (360 aa).

The NADP(+) site is built by Arg-48 and Arg-54. FMN is bound by residues 125–127, 246–247, Gly-286, 301–305, and Arg-327; these read RSS, NA, and KPTSS.

This sequence belongs to the chorismate synthase family. Homotetramer. Requires FMNH2 as cofactor.

The catalysed reaction is 5-O-(1-carboxyvinyl)-3-phosphoshikimate = chorismate + phosphate. It functions in the pathway metabolic intermediate biosynthesis; chorismate biosynthesis; chorismate from D-erythrose 4-phosphate and phosphoenolpyruvate: step 7/7. Catalyzes the anti-1,4-elimination of the C-3 phosphate and the C-6 proR hydrogen from 5-enolpyruvylshikimate-3-phosphate (EPSP) to yield chorismate, which is the branch point compound that serves as the starting substrate for the three terminal pathways of aromatic amino acid biosynthesis. This reaction introduces a second double bond into the aromatic ring system. The chain is Chorismate synthase from Haemophilus ducreyi (strain 35000HP / ATCC 700724).